Reading from the N-terminus, the 60-residue chain is MTKEIKVKVQLVRSPIGTQESHRATVRGLGLRGVNSVSELQDTPAVRGMINKISYLVKVI.

The protein belongs to the universal ribosomal protein uL30 family. As to quaternary structure, part of the 50S ribosomal subunit.

This chain is Large ribosomal subunit protein uL30, found in Polaromonas naphthalenivorans (strain CJ2).